The primary structure comprises 694 residues: Maintenance of telomere capping protein 4 (694 aa).

The segment covering 1–12 has biased composition (basic and acidic residues); the sequence is MTHTNEHDHKAE. The tract at residues 1–26 is disordered; sequence MTHTNEHDHKAEQQQNGRGDTTTETV. The segment covering 13 to 26 has biased composition (polar residues); it reads QQQNGRGDTTTETV. The residue at position 85 (Ser-85) is a Phosphoserine. Residues 211-222 are compositionally biased toward low complexity; that stretch reads YSPSNESSGSSS. Disordered stretches follow at residues 211–287, 325–437, and 465–511; these read YSPS…PEAQ, AKGS…TETY, and KTSN…PVGL. The span at 223–243 shows a compositional bias: basic residues; the sequence is SRRHHGHHIHPRRHLQHHSRV. Residues 244–257 are compositionally biased toward polar residues; the sequence is RTANSVHSNTQSLT. Thr-263 carries the phosphothreonine modification. The segment covering 276 to 287 has biased composition (polar residues); the sequence is MITKIATTPEAQ. The span at 403-417 shows a compositional bias: low complexity; it reads SNGGTSRRSSNNGES. Residues 418 to 437 are compositionally biased toward polar residues; it reads ISTNSSKSSMGITFGNTETY. Over residues 471–485 the composition is skewed to basic and acidic residues; the sequence is LRAEGEQALESDKEL. 2 positions are modified to phosphoserine: Ser-481 and Ser-491. Phosphotyrosine is present on Tyr-493. Residues 655–675 traverse the membrane as a helical segment; sequence RLLEFGIVLVLWTIWFLFSVL.

It localises to the membrane. Its subcellular location is the cytoplasm. In Saccharomyces cerevisiae (strain ATCC 204508 / S288c) (Baker's yeast), this protein is Maintenance of telomere capping protein 4 (MTC4).